The sequence spans 432 residues: D-amino acid dehydrogenase (432 aa).

Residue 3-17 coordinates FAD; it reads VVILGSGVVGVASAW.

This sequence belongs to the DadA oxidoreductase family. FAD serves as cofactor.

It catalyses the reaction a D-alpha-amino acid + A + H2O = a 2-oxocarboxylate + AH2 + NH4(+). It functions in the pathway amino-acid degradation; D-alanine degradation; NH(3) and pyruvate from D-alanine: step 1/1. Its function is as follows. Oxidative deamination of D-amino acids. This is D-amino acid dehydrogenase from Shigella dysenteriae serotype 1 (strain Sd197).